A 155-amino-acid chain; its full sequence is Ribosome-binding factor A (155 aa).

Basic and acidic residues-rich tracts occupy residues 116–125 (ARQRDQEVAR) and 142–155 (SPHE…ADGW). A disordered region spans residues 116–155 (ARQRDQEVARQAEGATPAGDANPYKTSPHEGRPESEADGW).

This sequence belongs to the RbfA family. As to quaternary structure, monomer. Binds 30S ribosomal subunits, but not 50S ribosomal subunits or 70S ribosomes.

Its subcellular location is the cytoplasm. Functionally, one of several proteins that assist in the late maturation steps of the functional core of the 30S ribosomal subunit. Associates with free 30S ribosomal subunits (but not with 30S subunits that are part of 70S ribosomes or polysomes). Required for efficient processing of 16S rRNA. May interact with the 5'-terminal helix region of 16S rRNA. The protein is Ribosome-binding factor A of Corynebacterium kroppenstedtii (strain DSM 44385 / JCM 11950 / CIP 105744 / CCUG 35717).